We begin with the raw amino-acid sequence, 900 residues long: Suppressor of activated egl-4 protein 1 (900 aa).

Disordered regions lie at residues 1-75 (MPPP…HLPT), 340-380 (PVAE…SRKN), and 406-425 (WAST…ESLE). A compositionally biased stretch (polar residues) spans 53-75 (ASGQQHRPSIMSGQSHQNNHLPT). Composition is skewed to basic and acidic residues over residues 358–377 (GDMK…DGPS) and 412–425 (ADEK…ESLE). One can recognise an ELM2 domain in the interval 451-544 (PHINLGKNYQ…AAVEDLLRSD (94 aa)). Positions 560–611 (NDSVLWTPDEIYQFQDAIYQSEKDFDKVAVELPGKSVKECVQFYYTWKKDCP) constitute an SANT domain. Residues 710 to 729 (PTAPRAHHTPSASASKKGAQ) form a disordered region. The segment at 736–758 (FHCRLCDKCFEKVKSLNAHMKSH) adopts a C2H2-type zinc-finger fold.

As to quaternary structure, may be a component of a histone deacetylase complex containing saeg-2, saeg-1 and hda-2. May interact with egl-4. In terms of tissue distribution, ubiquitously expressed.

It localises to the nucleus. Functionally, as a likely component of a histone deacetylase complex, together with saeg-2 and hda-2, functions downstream of the cAMP-dependent kinase egl-4 to regulate the expression of genes required for egg-laying and foraging. The chain is Suppressor of activated egl-4 protein 1 from Caenorhabditis elegans.